Reading from the N-terminus, the 159-residue chain is Serine-protein kinase RsbW (159 aa).

Belongs to the anti-sigma-factor family.

It catalyses the reaction L-seryl-[protein] + ATP = O-phospho-L-seryl-[protein] + ADP + H(+). The catalysed reaction is L-threonyl-[protein] + ATP = O-phospho-L-threonyl-[protein] + ADP + H(+). Its function is as follows. Negative regulator of sigma-B activity. Phosphorylates and inactivates its specific antagonist protein, RsbV. Upon phosphorylation of RsbV, RsbW is released and binds to sigma-B, thereby blocking its ability to form an RNA polymerase holoenzyme (E-sigma-B). This chain is Serine-protein kinase RsbW, found in Staphylococcus epidermidis.